An 803-amino-acid polypeptide reads, in one-letter code: Protein AMEIOTIC 1 homolog (803 aa).

2 disordered regions span residues 21–64 (RPQV…QSLS) and 264–333 (RLRQ…RWSA). Basic and acidic residues predominate over residues 39–50 (NGKDDANHDESK). Polar residues predominate over residues 51–64 (NQSPGLPLSRQSLS). Basic and acidic residues predominate over residues 283–295 (KREEAESSMDKSR). Residues 296-313 (AARKKKAKTYKSPKKVEK) are compositionally biased toward basic residues. Basic and acidic residues predominate over residues 314–333 (RRVVEAKDGDPRRGKDRWSA). Positions 450 to 567 (VKKKVEELAE…SSFLSLKEQL (118 aa)) form a coiled coil. The tract at residues 651–688 (ISGGGSSSCPVASGPEQLPRSSSCPSIGPGGLPPSSRA) is disordered.

It localises to the nucleus. Its subcellular location is the chromosome. Functionally, plays a fundamental role in building the proper chromosome structure at the beginning of meiosis in male meiocytes. Required for the transition from leptotene to zygotene in meiocytes. Required for homologous chromosome pairing. This Oryza sativa subsp. japonica (Rice) protein is Protein AMEIOTIC 1 homolog.